We begin with the raw amino-acid sequence, 354 residues long: Sulfate/thiosulfate import ATP-binding protein CysA (354 aa).

Positions 3 to 237 constitute an ABC transporter domain; it reads IEVRGLSKRF…PATPFVYGFL (235 aa). 35 to 42 contributes to the ATP binding site; sequence GPSGCGKT.

Belongs to the ABC transporter superfamily. Sulfate/tungstate importer (TC 3.A.1.6) family. As to quaternary structure, the complex is composed of two ATP-binding proteins (CysA), two transmembrane proteins (CysT and CysW) and a solute-binding protein (CysP).

Its subcellular location is the cell inner membrane. It catalyses the reaction sulfate(out) + ATP + H2O = sulfate(in) + ADP + phosphate + H(+). The enzyme catalyses thiosulfate(out) + ATP + H2O = thiosulfate(in) + ADP + phosphate + H(+). Part of the ABC transporter complex CysAWTP involved in sulfate/thiosulfate import. Responsible for energy coupling to the transport system. The chain is Sulfate/thiosulfate import ATP-binding protein CysA from Bordetella bronchiseptica (strain ATCC BAA-588 / NCTC 13252 / RB50) (Alcaligenes bronchisepticus).